The sequence spans 5386 residues: Nonribosomal peptide synthetase 2 (5386 aa).

Residues 45–435 (HDANAIDFLE…QGLLECLGRV (391 aa)) are adenylation 1. The Carrier 1 domain maps to 544–617 (SPKDPIGHSV…DLIEVCRESK (74 aa)). An O-(pantetheine 4'-phosphoryl)serine modification is found at Ser578. Positions 652–1059 (LPCTPLQEAM…VDADRHVSAI (408 aa)) are condensation 1. Residues 1089 to 1482 (EKWAATDPHR…GRTDDQVKIR (394 aa)) form an adenylation 2 region. The region spanning 1611–1688 (ELLSQWERDV…SLASLKKLQS (78 aa)) is the Carrier 2 domain. The residue at position 1648 (Ser1648) is an O-(pantetheine 4'-phosphoryl)serine. A condensation 2 region spans residues 1731–2141 (ILPCTPLQEA…ALSADTDMFP (411 aa)). Residues 2166–2551 (FERTALLHPD…GRLDDQVKIR (386 aa)) are adenylation 3. Residues 2652–2725 (SKTESEVRNI…DLAEHLDQIS (74 aa)) enclose the Carrier 3 domain. O-(pantetheine 4'-phosphoryl)serine is present on Ser2686. Residues 2763-3174 (RPCTPLQNGM…HSQIPLAKTD (412 aa)) are condensation 3. The interval 3202-3603 (EKTAQEHPQR…GRADDQVKLR (402 aa)) is adenylation 4. The Carrier 4 domain occupies 3728 to 3805 (EQWSKQEEKL…RLAKSLAANS (78 aa)). Position 3765 is an O-(pantetheine 4'-phosphoryl)serine (Ser3765). Residues 3846–4250 (LAPCTPLQQG…LDQAINDPSA (405 aa)) are condensation 4. The region spanning 4281–4357 (FEWSDNAIAI…KMAQNMSMKN (77 aa)) is the Carrier 5 domain. Ser4318 bears the O-(pantetheine 4'-phosphoryl)serine mark. Residues 4391–4802 (EEILPLTPLQ…ERAEAPVIDM (412 aa)) form a condensation 5 region. The disordered stretch occupies residues 4821-4842 (HTGSGHVESGEDDGQDTPSTET). Residues 4840-4913 (TETTNRIRKI…KMAKLADARA (74 aa)) enclose the Carrier 6 domain. At Ser4874 the chain carries O-(pantetheine 4'-phosphoryl)serine. Positions 4952–5257 (QMLPVTAGQL…VQAHLRHLND (306 aa)) are condensation 6.

This sequence belongs to the NRP synthetase family.

Its pathway is siderophore biosynthesis. Functionally, nonribosomal peptide synthetase; part of the gene cluster that mediates the biosynthesis of hydroxamate-containing siderophores that play a critical role in virulence. Cochliobolus heterostrophus produces extracellular coprogen-type siderophores including coprogen, neocoprogen I and neocoprogen II, as well as the intracellular siderophore ferricrocin. The role of extracellular siderophores is to supply iron to the fungus during plant infection, and the intracellular ferricrocin is required for intracellular iron distribution and storage with a crucial role in ascus and ascospore development. SIDA2 catalyzes the conversion of L-ornithine to N(5)-hydroxyornithine, the first step in the biosynthesis of all hydroxamate-containing siderophores. The assembly of extracellular coprogen-type siderophores is then performed by the nonribosomal peptide synthetase (NRPS) NPS6 whereas the intracellular siderophore ferricrocin is assembled by NPS2. This Cochliobolus heterostrophus (strain C4 / ATCC 48331 / race T) (Southern corn leaf blight fungus) protein is Nonribosomal peptide synthetase 2.